We begin with the raw amino-acid sequence, 156 residues long: Gene 55 protein (156 aa).

Residues 132–156 (KRRWSGGNASSHEERMRGPFTEVAE) are disordered.

The polypeptide is Gene 55 protein (55) (Mycobacterium phage L5 (Mycobacteriophage L5)).